The following is a 277-amino-acid chain: MESQSCKLTIKDLMSAGAHFGHQTRRWNPKMKLYIFEEKNGLYIINLAKTLQQLRNALPHIRKVIQDNKTVLFVGTKKQAKCVIREAAIEAGEFFIAERWLGGMLTNMTTIRNSIKTLDKIEKDLSRNQAYLTKKEAALLAKRHQKLLRNLEGIRYMKKAPGLLVVVDPSYEKIAVAEAKKLGIPVLALVDTNCDPTPIDHVIPCNDDSLKSIRLIINVIKENIIEAKHKLGIEIVSPVKSLEVPDLSAFESSQDDESDEENREEDLLAKKFDGEAN.

A disordered region spans residues 247-277; sequence LSAFESSQDDESDEENREEDLLAKKFDGEAN. The span at 253–264 shows a compositional bias: acidic residues; the sequence is SQDDESDEENRE. Positions 265–277 are enriched in basic and acidic residues; it reads EDLLAKKFDGEAN.

The protein belongs to the universal ribosomal protein uS2 family.

This chain is Small ribosomal subunit protein uS2 (rpsB), found in Chlamydia pneumoniae (Chlamydophila pneumoniae).